The following is a 92-amino-acid chain: Non-specific lipid-transfer protein A (92 aa).

Intrachain disulfides connect Cys-3–Cys-51, Cys-13–Cys-28, Cys-29–Cys-74, and Cys-49–Cys-88.

Belongs to the plant LTP family.

Functionally, plant non-specific lipid-transfer proteins transfer phospholipids as well as galactolipids across membranes. May play a role in wax or cutin deposition in the cell walls of expanding epidermal cells and certain secretory tissues. The polypeptide is Non-specific lipid-transfer protein A (Ricinus communis (Castor bean)).